We begin with the raw amino-acid sequence, 256 residues long: uncharacterized protein (256 aa).

Belongs to the methyltransferase superfamily.

It is found in the cytoplasm. It localises to the nucleus. In terms of biological role, probable methyltransferase. This is an uncharacterized protein from Schizosaccharomyces pombe (strain 972 / ATCC 24843) (Fission yeast).